Here is a 765-residue protein sequence, read N- to C-terminus: Palmitoyltransferase ZDHHC8 (765 aa).

Over 1 to 13 (MPRSPGTRLKPAK) the chain is Cytoplasmic. A helical transmembrane segment spans residues 14-34 (YIPVATAAALLVGSSTLFFVF). Residues 35–52 (TCPWLTRAVSPAVPVYNG) are Lumenal-facing. Residues 53–73 (IIFLFVLANFSMATFMDPGVF) traverse the membrane as a helical segment. Topologically, residues 74–148 (PRADEDEDKE…NCIGRRNYRY (75 aa)) are cytoplasmic. The region spanning 104-154 (KWCATCHFYRPPRCSHCSVCDNCVEDFDHHCPWVNNCIGRRNYRYFFLFLL) is the DHHC domain. Cysteine 134 (S-palmitoyl cysteine intermediate) is an active-site residue. Residues 149-169 (FFLFLLSLSAHMVGVVAFGLV) traverse the membrane as a helical segment. The Lumenal segment spans residues 170–190 (YVLNHAEGLGAAHTTITMAVM). The chain crosses the membrane as a helical span at residues 191–211 (CVAGLFFIPVIGLTGFHVVLV). Over 212 to 765 (TRGRTTNEQV…VGGTTYEISV (554 aa)) the chain is Cytoplasmic. A disordered region spans residues 293 to 352 (GLGRSKSKGSLDRLDEKPLDLGPPLPPKIEAGTFSSDLQTPRPGSAESALSVQRTSPPTP). The segment covering 301 to 311 (GSLDRLDEKPL) has biased composition (basic and acidic residues). Position 337 is a phosphoserine (serine 337). Position 441 is an omega-N-methylarginine (arginine 441). Positions 509–540 (LHPGATGDPPRPLPRSFSPVLGPRPREPSPVR) are disordered. Phosphoserine occurs at positions 606, 627, 675, 725, and 743. The interval 613-746 (GPGFGGARNP…PPGPSASPTR (134 aa)) is disordered. Over residues 622–653 (PALQTSLSSLSSSVSRAPRTSSSSLQADQASS) the composition is skewed to low complexity.

Belongs to the DHHC palmitoyltransferase family. ERF2/ZDHHC9 subfamily.

The protein localises to the golgi apparatus membrane. It is found in the mitochondrion membrane. The catalysed reaction is L-cysteinyl-[protein] + hexadecanoyl-CoA = S-hexadecanoyl-L-cysteinyl-[protein] + CoA. Its function is as follows. Palmitoyltransferase that catalyzes the addition of palmitate onto various protein substrates and therefore functions in several unrelated biological processes. Through the palmitoylation of ABCA1 regulates the localization of the transporter to the plasma membrane and thereby regulates its function in cholesterol and phospholipid efflux. Could also pamitoylate the D(2) dopamine receptor DRD2 and regulate its stability and localization to the plasma membrane. Could also play a role in glutamatergic transmission. This Pan troglodytes (Chimpanzee) protein is Palmitoyltransferase ZDHHC8.